A 486-amino-acid chain; its full sequence is Malonate-semialdehyde dehydrogenase (486 aa).

Phe154, Lys178, Glu181, Arg182, and Ser231 together coordinate NAD(+). Catalysis depends on Cys286, which acts as the Nucleophile. NAD(+) is bound at residue Glu386.

The protein belongs to the aldehyde dehydrogenase family. IolA subfamily. Homotetramer.

The catalysed reaction is 3-oxopropanoate + NAD(+) + CoA + H2O = hydrogencarbonate + acetyl-CoA + NADH + H(+). The enzyme catalyses 2-methyl-3-oxopropanoate + NAD(+) + CoA + H2O = propanoyl-CoA + hydrogencarbonate + NADH + H(+). The protein operates within polyol metabolism; myo-inositol degradation into acetyl-CoA; acetyl-CoA from myo-inositol: step 7/7. Its function is as follows. Catalyzes the oxidation of malonate semialdehyde (MSA) and methylmalonate semialdehyde (MMSA) into acetyl-CoA and propanoyl-CoA, respectively. Is involved in a myo-inositol catabolic pathway. Bicarbonate, and not CO2, is the end-product of the enzymatic reaction. This is Malonate-semialdehyde dehydrogenase from Bacillus cereus (strain G9842).